The following is a 501-amino-acid chain: Glycine betaine/proline/ectoine/pipecolic acid transporter OusA (501 aa).

Residues 1-38 (MKLKRKRVKPIALDDVTIIDDGRLRKAITAAALGNAME) lie on the Cytoplasmic side of the membrane. Residues 39 to 59 (WFDFGVYGFVAYALGQVFFPG) form a helical membrane-spanning segment. Topologically, residues 60 to 66 (ADPGVQM) are periplasmic. Residues 67-87 (IAALATFSVPFLIRPLGGVFF) traverse the membrane as a helical segment. Topologically, residues 88–98 (GALGDKYGRQK) are cytoplasmic. Residues 99-119 (ILAITIIIMSISTFCIGLIPS) traverse the membrane as a helical segment. Residues 120–122 (YER) lie on the Periplasmic side of the membrane. A helical membrane pass occupies residues 123 to 143 (IGIWAPILLLLAKMAQGFSVG). Over 144-170 (GEYTGASIFVAEYSPDRKRGFMGSWLD) the chain is Cytoplasmic. Residues 171-191 (FGSIAGFVLGAGVVVLISTLI) form a helical membrane-spanning segment. The Periplasmic portion of the chain corresponds to 192 to 195 (GEQA). A helical membrane pass occupies residues 196-216 (FLAWGWRLPFFLALPLGLIGL). At 217–261 (YLRHALEETPAFRQHVEKLEQNDRDGLKAGPGVSFREIATHHWKS) the chain is on the cytoplasmic side. Residues 262–282 (LLVCIGLVIATNVTYYMLLTY) traverse the membrane as a helical segment. Residues 283–298 (MPSYLSHSLHYSENHG) lie on the Periplasmic side of the membrane. Residues 299 to 319 (VLIIIAIMIGMLFVQPVMGLL) traverse the membrane as a helical segment. Over 320–326 (SDRFGRK) the chain is Cytoplasmic. The helical transmembrane segment at 327 to 347 (PFVVIGSVAMFFLAVPSFMLI) threads the bilayer. Residues 348-350 (NSD) are Periplasmic-facing. Residues 351–371 (IIGLIFLGLLMLAVILNAFTG) form a helical membrane-spanning segment. Over 372–391 (VMASTLPALFPTHIRYSALA) the chain is Cytoplasmic. A helical transmembrane segment spans residues 392 to 412 (SAFNISVLIAGLTPTVAAWLV). Residues 413–417 (ESSQN) are Periplasmic-facing. Residues 418–438 (LYMPAYYLMVIAVIGLLTGLF) traverse the membrane as a helical segment. The Cytoplasmic portion of the chain corresponds to 439 to 501 (MKETANKPLK…LVAQHPRIND (63 aa)). A coiled-coil region spans residues 461 to 495 (KEILQEHHDNIEHKIEDITQQIAELEAKRQLLVAQ).

The protein belongs to the major facilitator superfamily. Sugar transporter (TC 2.A.1.1) family.

The protein localises to the cell inner membrane. Its function is as follows. Involved in uptake and accumulation of various osmoprotectants. Allows the uptake of glycine betaine, proline, ectoine, and pipecolic acid. May be a contributory factor in the infection progression within the host. The polypeptide is Glycine betaine/proline/ectoine/pipecolic acid transporter OusA (Dickeya dadantii (strain 3937) (Erwinia chrysanthemi (strain 3937))).